Consider the following 190-residue polypeptide: Pyridoxal 5'-phosphate synthase subunit PdxT (190 aa).

46 to 48 (GES) serves as a coordination point for L-glutamine. Catalysis depends on cysteine 78, which acts as the Nucleophile. Residues arginine 105 and 138–139 (IR) contribute to the L-glutamine site. Active-site charge relay system residues include histidine 174 and glutamate 176.

Belongs to the glutaminase PdxT/SNO family. In terms of assembly, in the presence of PdxS, forms a dodecamer of heterodimers. Only shows activity in the heterodimer.

The enzyme catalyses aldehydo-D-ribose 5-phosphate + D-glyceraldehyde 3-phosphate + L-glutamine = pyridoxal 5'-phosphate + L-glutamate + phosphate + 3 H2O + H(+). The catalysed reaction is L-glutamine + H2O = L-glutamate + NH4(+). It functions in the pathway cofactor biosynthesis; pyridoxal 5'-phosphate biosynthesis. Catalyzes the hydrolysis of glutamine to glutamate and ammonia as part of the biosynthesis of pyridoxal 5'-phosphate. The resulting ammonia molecule is channeled to the active site of PdxS. The sequence is that of Pyridoxal 5'-phosphate synthase subunit PdxT from Bifidobacterium longum (strain NCC 2705).